Consider the following 263-residue polypeptide: MARGPKKHLKRVAAPKHWMLDKLTGVFAPRPSTGPHKLRECLPLIIFLRNRLKYALTGDEVKKICMQRFIKIDGKVRVDVTYPAGFMDVISIEKTGEHFRLVYDTKGRFAVHRITAEEAKYKLCKVRKITVGTKGIPHLVTHDARTIRYPDPVIKVNDTVRIDLGSGKITSFIKFDTGNVCMVIGGANLGRVGVITNRERHPGSFDVVHVKDASGNSFATRISNIFVIGNGNKPWISLPRGKGIRLTIAEERDKRLAAKQSSG.

The S4 RNA-binding domain occupies 42–104 (LPLIIFLRNR…TGEHFRLVYD (63 aa)).

Belongs to the eukaryotic ribosomal protein eS4 family.

The chain is Small ribosomal subunit protein eS4, Y isoform 1 (RPS4Y1) from Macaca fuscata fuscata (Japanese macaque).